A 303-amino-acid polypeptide reads, in one-letter code: mRNA-capping enzyme subunit beta (303 aa).

This sequence belongs to the fungal TPase family. As to quaternary structure, heterodimer. The mRNA-capping enzyme is composed of two separate chains alpha and beta, respectively a mRNA guanylyltransferase and an mRNA 5'-triphosphate monophosphatase. It depends on Mg(2+) as a cofactor.

It localises to the nucleus. It catalyses the reaction a 5'-end triphospho-ribonucleoside in mRNA + H2O = a 5'-end diphospho-ribonucleoside in mRNA + phosphate + H(+). Functionally, first step of mRNA capping. Converts the 5'-triphosphate end of a nascent mRNA chain into a diphosphate end. The chain is mRNA-capping enzyme subunit beta (pct1) from Schizosaccharomyces pombe (strain 972 / ATCC 24843) (Fission yeast).